A 408-amino-acid chain; its full sequence is LL-diaminopimelate aminotransferase (408 aa).

Substrate is bound by residues Tyr15 and Gly42. Pyridoxal 5'-phosphate-binding positions include Tyr72, Ser108–Lys109, Tyr132, Asn187, Tyr218, and Ser246–Ser248. Lys109, Tyr132, and Asn187 together coordinate substrate. Lys249 is subject to N6-(pyridoxal phosphate)lysine. Pyridoxal 5'-phosphate contacts are provided by Arg257 and Asn292. Asn292 and Arg388 together coordinate substrate.

Belongs to the class-I pyridoxal-phosphate-dependent aminotransferase family. LL-diaminopimelate aminotransferase subfamily. As to quaternary structure, homodimer. Pyridoxal 5'-phosphate serves as cofactor.

It catalyses the reaction (2S,6S)-2,6-diaminopimelate + 2-oxoglutarate = (S)-2,3,4,5-tetrahydrodipicolinate + L-glutamate + H2O + H(+). The protein operates within amino-acid biosynthesis; L-lysine biosynthesis via DAP pathway; LL-2,6-diaminopimelate from (S)-tetrahydrodipicolinate (aminotransferase route): step 1/1. Functionally, involved in the synthesis of meso-diaminopimelate (m-DAP or DL-DAP), required for both lysine and peptidoglycan biosynthesis. Catalyzes the direct conversion of tetrahydrodipicolinate to LL-diaminopimelate. This is LL-diaminopimelate aminotransferase from Prochlorococcus marinus (strain SARG / CCMP1375 / SS120).